Consider the following 2153-residue polypeptide: RNA-directed RNA polymerase L (2153 aa).

The Mn(2+) site is built by His36, Glu54, Asp97, Glu110, and Val111. The active-site For endonuclease activity is Lys124. In terms of domain architecture, RdRp catalytic spans 957–1143 (TGKSIKFKRK…AINQEMWKSM (187 aa)). Asp1100 lines the Mg(2+) pocket.

This sequence belongs to the Bunyavirales RNA polymerase family. As to quaternary structure, interacts with the viral nucleoprotein. It depends on Mn(2+) as a cofactor. Mg(2+) serves as cofactor.

The protein resides in the host cytoplasm. It is found in the host perinuclear region. It catalyses the reaction RNA(n) + a ribonucleoside 5'-triphosphate = RNA(n+1) + diphosphate. Its function is as follows. RNA-dependent RNA polymerase, which is responsible for the replication and transcription of the viral RNA genome using antigenomic RNA as an intermediate. During transcription, synthesizes subgenomic RNAs and assures their capping by a cap-snatching mechanism, which involves the endonuclease activity cleaving the host capped pre-mRNAs. These short capped RNAs are then used as primers for viral transcription. Cleaves ssRNA substrates but not DNA. Seems to downregulate the expression of its own and heterologous mRNAs through its endonuclease activity. The sequence is that of RNA-directed RNA polymerase L from Abrothrix longipilis (Long-haired grass mouse).